A 559-amino-acid chain; its full sequence is Cytoplasmic polyadenylation element-binding protein 1 (559 aa).

Positions 222-243 (SRMDHSSSPLTPPPSASPSGSL) are disordered. RRM domains follow at residues 304–401 (CKVF…DAQV) and 423–504 (NTVF…PYLE). 8 residues coordinate Zn(2+): C508, C511, C520, C525, C530, C533, H538, and H546.

It belongs to the RRM CPEB family. As to expression, expressed in oocytes (at protein level). During oocyte maturation becomes detectable at stage Ib, and remains ubiquitously distributed within the oocyte cytoplasm until stage II. It then follows a gradual accumulation to the future animal pole during stage III, and remains localized to this pole at stage IV (at protein level). Expressed in oocytes, blastomeres and pre-mid-blastula transition embryos. Its expression during oogenesis is ubiquitous at stages I and II, but gradually accumulated at the periphery of the oocyte in the presumptive animal pole during stage III. Expression was maintained in that region at stage IV, and then became delocalized at stage V to cover a much broader area presumably encompassing the future blastodisc.

It localises to the cytoplasm. Sequence-specific RNA-binding protein that regulates mRNA cytoplasmic polyadenylation and translation initiation during oocyte maturation and early development. Binds to the cytoplasmic polyadenylation element (CPE), an uridine-rich sequence element (consensus sequence 5'-UUUUUAU-3') within the mRNA 3'-UTR. This is Cytoplasmic polyadenylation element-binding protein 1 (cpeb1) from Danio rerio (Zebrafish).